The primary structure comprises 256 residues: Small ribosomal subunit protein eS1 (256 aa).

The residue at position 2 (Ala2) is an N-acetylalanine; partial.

Belongs to the eukaryotic ribosomal protein eS1 family. In terms of assembly, component of the small ribosomal subunit. Mature ribosomes consist of a small (40S) and a large (60S) subunit. The 40S subunit contains about 33 different proteins and 1 molecule of RNA (18S). The 60S subunit contains about 49 different proteins and 3 molecules of RNA (25S, 5.8S and 5S).

The protein localises to the cytoplasm. The polypeptide is Small ribosomal subunit protein eS1 (Fusarium vanettenii (strain ATCC MYA-4622 / CBS 123669 / FGSC 9596 / NRRL 45880 / 77-13-4) (Fusarium solani subsp. pisi)).